We begin with the raw amino-acid sequence, 32 residues long: U3-theraphotoxin-Hhn1r (32 aa).

3 disulfides stabilise this stretch: C2–C15, C9–C20, and C14–C27.

This sequence belongs to the neurotoxin 10 (Hwtx-1) family. 16 (Hntx-8) subfamily. As to expression, expressed by the venom gland.

It localises to the secreted. Its function is as follows. Ion channel inhibitor. In Cyriopagopus hainanus (Chinese bird spider), this protein is U3-theraphotoxin-Hhn1r.